An 863-amino-acid chain; its full sequence is Alanine--tRNA ligase (863 aa).

Zn(2+)-binding residues include H552, H556, C654, and H658.

Belongs to the class-II aminoacyl-tRNA synthetase family. It depends on Zn(2+) as a cofactor.

It localises to the cytoplasm. The enzyme catalyses tRNA(Ala) + L-alanine + ATP = L-alanyl-tRNA(Ala) + AMP + diphosphate. Functionally, catalyzes the attachment of alanine to tRNA(Ala) in a two-step reaction: alanine is first activated by ATP to form Ala-AMP and then transferred to the acceptor end of tRNA(Ala). Also edits incorrectly charged Ser-tRNA(Ala) and Gly-tRNA(Ala) via its editing domain. The sequence is that of Alanine--tRNA ligase from Nitrosomonas eutropha (strain DSM 101675 / C91 / Nm57).